A 332-amino-acid chain; its full sequence is Hdr-like menaquinol oxidoreductase cytochrome b-like subunit (332 aa).

5 consecutive transmembrane segments (helical) span residues 3 to 23 (GVIFGVIVPYIAVAIFVIGVI), 97 to 117 (DARWLWLFGILFHYSLLLVLI), 143 to 163 (VFIPSVYMSGLAIVAALFLLW), 177 to 197 (LPSDHFALILLLAITISGNVM), and 230 to 250 (IEPIFYVHFALASFLLAYFPF).

Consists of five subunits: an integral membrane subunit, a cytochrome b-like subunit, a cytochrome c subunit and two iron-sulfur subunits.

Its subcellular location is the cell membrane. In terms of biological role, has menaquinol-oxidizing activity. HmeC and HmeD subunits may together mediate electron transfer from menaquinol to an unidentified electron acceptor on the cytoplasmic side of the membrane. In Archaeoglobus fulgidus (strain ATCC 49558 / DSM 4304 / JCM 9628 / NBRC 100126 / VC-16), this protein is Hdr-like menaquinol oxidoreductase cytochrome b-like subunit (hmeC).